Consider the following 24-residue polypeptide: U4-ctenitoxin-Co1b (24 aa).

In terms of processing, disulfide bonds are present. In terms of tissue distribution, expressed by the venom gland.

It is found in the secreted. In terms of biological role, omega-agatoxins are antagonists of voltage-gated calcium channels (Cav). The protein is U4-ctenitoxin-Co1b of Ctenus ornatus (Brazilian spider).